Reading from the N-terminus, the 134-residue chain is ATP synthase epsilon chain, chloroplastic (134 aa).

Belongs to the ATPase epsilon chain family. In terms of assembly, F-type ATPases have 2 components, CF(1) - the catalytic core - and CF(0) - the membrane proton channel. CF(1) has five subunits: alpha(3), beta(3), gamma(1), delta(1), epsilon(1). CF(0) has three main subunits: a, b and c.

It localises to the plastid. The protein localises to the chloroplast thylakoid membrane. Produces ATP from ADP in the presence of a proton gradient across the membrane. In Liriodendron tulipifera (Tuliptree), this protein is ATP synthase epsilon chain, chloroplastic.